A 1744-amino-acid chain; its full sequence is Complement C4-B (1744 aa).

A signal peptide spans 1-19; it reads MRLLWGLIWASSFFTLSLQ. Cys-68 and Cys-97 form a disulfide bridge. Asn-226 carries N-linked (GlcNAc...) asparagine glycosylation. A disulfide bridge connects residues Cys-635 and Cys-669. The propeptide occupies 676 to 679; that stretch reads RKKR. 3 cysteine pairs are disulfide-bonded: Cys-702-Cys-728, Cys-703-Cys-735, and Cys-716-Cys-736. Residues 702–736 form the Anaphylatoxin-like domain; that stretch reads CCQDGVTRLPMMRSCEQRAARVQQPDCREPFLSCC. Asn-862 is a glycosylation site (N-linked (GlcNAc...) asparagine). Ser-918 carries the post-translational modification Phosphoserine. Positions 1010–1013 form a cross-link, isoglutamyl cysteine thioester (Cys-Gln); the sequence is CGEQ. Residues Asn-1328 and Asn-1391 are each glycosylated (N-linked (GlcNAc...) asparagine). Tyr-1417, Tyr-1420, and Tyr-1422 each carry sulfotyrosine. Residues 1447–1453 constitute a propeptide that is removed on maturation; the sequence is RRNRRRR. Intrachain disulfides connect Cys-1471/Cys-1535, Cys-1583/Cys-1588, Cys-1595/Cys-1673, Cys-1618/Cys-1742, and Cys-1718/Cys-1727. One can recognise an NTR domain in the interval 1595 to 1742; sequence CPRQRRALER…FLQEYGTQGC (148 aa).

In terms of assembly, in absence of complement activation, circulates in blood as a disulfide-linked trimer of an alpha, beta and gamma chain. As to quaternary structure, complement C4b is composed of complement C4b-A, complement C4 beta and complement C4 gamma chains that are associated via disulfide bonds. Non-enzymatic component of the C3 convertase, also named C4bC2b, composed of the serine protease complement C2b (C2), as well as complement C4b. Non-enzymatic component of the C5 convertase, also named C4bC2bC3b, composed of the serine protease complement C2b (C2), complement C3b, as well as complement C4b. Interacts with CR1 (via Sushi 1 and Sushi 2 domains). (Microbial infection) Binds B.burgdorferi OspC, the interaction is inhibited by complement factor C2. This binding may inhibit the complement cascade and allow the bacteria to survive in the host bloodstream. Post-translationally, prior to secretion, the single-chain precursor is enzymatically cleaved by plasminogen (PLG) to yield non-identical chains alpha, beta and gamma. During activation of the complement systems, the alpha chain is cleaved into C4a and C4b by different proteases depending on the complement pathway: C4b stays linked to the beta and gamma chains, while C4a is released in the plasma. The alpha chain is cleaved by C1S to generate C4a and C4b following activation by the classical complement system. The alpha chain is cleaved to generate C4a and C4b by MASP2 following activation by the lectin complement system. The alpha chain is cleaved by GZMK to generate C4a and C4b following activation by the GZMK complement system. Further degradation of C4b by C1 into the inactive fragments C4c and C4d blocks the generation of C3 convertase. The proteolytic cleavages often are incomplete so that many structural forms can be found in plasma. In terms of processing, upon activation, the internal thioester bond reacts with carbohydrate antigens on the target surface to form amide or ester bonds, leading to covalent association with the surface of pathogens. Complement C4b interacts with complement C3b via a thioester linkage. Post-translationally, N- and O-glycosylated. O-glycosylated with a core 1 or possibly core 8 glycan. Complement component C4 is expressed at highest levels in the liver, at moderate levels in the adrenal cortex, adrenal medulla, thyroid gland, and the kidney, and at lowest levels in the heart, ovary, small intestine, thymus, pancreas and spleen. The extra-hepatic sites of expression may be important for the local protection and inflammatory response.

The protein localises to the secreted. The protein resides in the synapse. It is found in the cell projection. It localises to the axon. Its subcellular location is the dendrite. The protein localises to the cell surface. Its function is as follows. Precursor of non-enzymatic components of the classical, lectin and GZMK complement pathways, which consist in a cascade of proteins that leads to phagocytosis and breakdown of pathogens and signaling that strengthens the adaptive immune system. In terms of biological role, non-enzymatic component of C3 and C5 convertases. Generated following cleavage by complement proteases (C1S, MASP2 or GZMK, depending on the complement pathway), it covalently attaches to the surface of pathogens, where it acts as an opsonin that marks the surface of antigens for removal. It then recruits the serine protease complement C2b to form the C3 and C5 convertases, which cleave and activate C3 and C5, respectively, the next components of the complement pathways. Complement C4b-B isotype catalyzes the transacylation of the thioester carbonyl group to form ester bonds with carbohydrate antigens, while C4b-A isotype is responsible for effective binding to form amide bonds with immune aggregates or protein antigens. Putative humoral mediator released following cleavage by complement proteases (C1S, MASP2 or GZMK, depending on the complement pathway). While it is strongly similar to anaphylatoxins, its role is unclear. Was reported to act as a mediator of local inflammatory process; however these effects were probably due to contamination with C3a and/C5a anaphylatoxins in biological assays. The protein is Complement C4-B of Homo sapiens (Human).